A 288-amino-acid polypeptide reads, in one-letter code: DegV domain-containing protein MYPU_3590 (288 aa).

The region spanning 3-275 (IAIVIDSSSG…LGAIAISLVK (273 aa)) is the DegV domain. Ser-61 and Ser-92 together coordinate hexadecanoate.

In terms of biological role, may bind long-chain fatty acids, such as palmitate, and may play a role in lipid transport or fatty acid metabolism. The sequence is that of DegV domain-containing protein MYPU_3590 from Mycoplasmopsis pulmonis (strain UAB CTIP) (Mycoplasma pulmonis).